The chain runs to 376 residues: ATP phosphoribosyltransferase regulatory subunit (376 aa).

Belongs to the class-II aminoacyl-tRNA synthetase family. HisZ subfamily. In terms of assembly, heteromultimer composed of HisG and HisZ subunits.

The protein localises to the cytoplasm. The protein operates within amino-acid biosynthesis; L-histidine biosynthesis; L-histidine from 5-phospho-alpha-D-ribose 1-diphosphate: step 1/9. Required for the first step of histidine biosynthesis. May allow the feedback regulation of ATP phosphoribosyltransferase activity by histidine. This chain is ATP phosphoribosyltransferase regulatory subunit, found in Brucella anthropi (strain ATCC 49188 / DSM 6882 / CCUG 24695 / JCM 21032 / LMG 3331 / NBRC 15819 / NCTC 12168 / Alc 37) (Ochrobactrum anthropi).